We begin with the raw amino-acid sequence, 479 residues long: NADH-quinone oxidoreductase subunit N (479 aa).

Helical transmembrane passes span 3 to 23 (MLYGIMPEISLLLSALIFQLI), 40 to 60 (IGFAAILIAILVFHPSWFNGI), 77 to 97 (IIILIFYIFLTLIYSGYIKVA), 102 to 122 (HSEYIVLMQLGALGGLILVSA), 125 to 145 (FMVMYLGIEMQGIIGYILTTF), 159 to 179 (YFILGTVFSAIMLFGISLVYG), 200 to 220 (MAVLVAAILMILVGVLFKLSI), 234 to 254 (APLVVVALFSSLPKISVLALL), 268 to 288 (FFYIKTIIMVLACLSLIVGAF), 299 to 319 (FIAYSAILNLGYAVLALVANS), 327 to 347 (ISYFYIIIYAASMLGFIAIII), 373 to 393 (SILIAIQMFSLVGIPPFAGFI), 409 to 429 (ELIIMGIAAVVIGSYCYLNIV), and 452 to 472 (LVSIASTIIVISLMIICMLFG).

The protein belongs to the complex I subunit 2 family. NDH-1 is composed of 14 different subunits. Subunits NuoA, H, J, K, L, M, N constitute the membrane sector of the complex.

It is found in the cell inner membrane. The enzyme catalyses a quinone + NADH + 5 H(+)(in) = a quinol + NAD(+) + 4 H(+)(out). Functionally, NDH-1 shuttles electrons from NADH, via FMN and iron-sulfur (Fe-S) centers, to quinones in the respiratory chain. The immediate electron acceptor for the enzyme in this species is believed to be ubiquinone. Couples the redox reaction to proton translocation (for every two electrons transferred, four hydrogen ions are translocated across the cytoplasmic membrane), and thus conserves the redox energy in a proton gradient. This chain is NADH-quinone oxidoreductase subunit N, found in Orientia tsutsugamushi (strain Ikeda) (Rickettsia tsutsugamushi).